A 152-amino-acid polypeptide reads, in one-letter code: Transcriptional regulator MraZ (152 aa).

SpoVT-AbrB domains are found at residues 5-52 (ATLV…PLPA) and 81-124 (ASEC…DEQT).

It belongs to the MraZ family. In terms of assembly, forms oligomers.

The protein localises to the cytoplasm. It localises to the nucleoid. Its function is as follows. Negatively regulates its own expression and that of the subsequent genes in the proximal part of the division and cell wall (dcw) gene cluster. Acts by binding directly to DNA. May also regulate the expression of genes outside the dcw cluster. The chain is Transcriptional regulator MraZ from Sodalis glossinidius (strain morsitans).